Here is a 188-residue protein sequence, read N- to C-terminus: Probable manganese efflux pump MntP (188 aa).

5 helical membrane-spanning segments follow: residues 3 to 23, 66 to 86, 106 to 128, 143 to 163, and 168 to 188; these read ITATVLLAFGMSMDAFAASIG, LEWNHWIAFVLLIFLGGRMII, WLLVTTAIATSLDAMAVGVGLAF, ATLIMSTLGMMVGRFIGPILG, and ILGGLVLIGIGVQILWTHFHG.

Belongs to the MntP (TC 9.B.29) family.

Its subcellular location is the cell inner membrane. Functionally, probably functions as a manganese efflux pump. In Escherichia fergusonii (strain ATCC 35469 / DSM 13698 / CCUG 18766 / IAM 14443 / JCM 21226 / LMG 7866 / NBRC 102419 / NCTC 12128 / CDC 0568-73), this protein is Probable manganese efflux pump MntP.